The sequence spans 679 residues: Glutamine-dependent NAD(+) synthetase (679 aa).

In terms of domain architecture, CN hydrolase spans 12-276 (VRVAACTHHT…VRRSVADVDT (265 aa)). Glu-52 serves as the catalytic Proton acceptor; for glutaminase activity. The active-site For glutaminase activity is Lys-121. Tyr-127 contacts L-glutamine. Cys-176 serves as the catalytic Nucleophile; for glutaminase activity. Residues Ser-203 and Arg-209 each coordinate L-glutamine. A ligase region spans residues 337–679 (QQDCYEAYNI…DQIDREVPKG (343 aa)). An ATP-binding site is contributed by 366–373 (GVSGGLDS). Residue Asn-456 coordinates deamido-NAD(+). ATP is bound at residue Thr-480. Deamido-NAD(+) is bound by residues Glu-485, 490–493 (WSTY), and Lys-635. The tract at residues 639-658 (LPNGPKVSHGGALSPRGDWR) is disordered.

It in the C-terminal section; belongs to the NAD synthetase family.

The catalysed reaction is deamido-NAD(+) + L-glutamine + ATP + H2O = L-glutamate + AMP + diphosphate + NAD(+) + H(+). It functions in the pathway cofactor biosynthesis; NAD(+) biosynthesis; NAD(+) from deamido-NAD(+) (L-Gln route): step 1/1. Functionally, catalyzes the ATP-dependent amidation of deamido-NAD to form NAD. Uses L-glutamine as a nitrogen source. The sequence is that of Glutamine-dependent NAD(+) synthetase from Mycobacterium bovis (strain ATCC BAA-935 / AF2122/97).